The primary structure comprises 396 residues: Na(+)/H(+) antiporter NhaA 1 (396 aa).

The next 11 membrane-spanning stretches (helical) occupy residues Leu-18 to Leu-38, Leu-60 to Val-80, Ile-95 to Gly-115, Gly-126 to Gly-146, Leu-155 to Phe-175, Ala-178 to Leu-198, Thr-201 to Leu-221, Val-262 to Ile-282, Ile-295 to Val-315, Gly-333 to Leu-353, and Ala-362 to Leu-382.

This sequence belongs to the NhaA Na(+)/H(+) (TC 2.A.33) antiporter family.

It is found in the cell inner membrane. It catalyses the reaction Na(+)(in) + 2 H(+)(out) = Na(+)(out) + 2 H(+)(in). Its function is as follows. Na(+)/H(+) antiporter that extrudes sodium in exchange for external protons. The polypeptide is Na(+)/H(+) antiporter NhaA 1 (Syntrophotalea carbinolica (strain DSM 2380 / NBRC 103641 / GraBd1) (Pelobacter carbinolicus)).